Here is a 124-residue protein sequence, read N- to C-terminus: Small ribosomal subunit protein uS13 (124 aa).

Residues 87–124 form a disordered region; that stretch reads GSYRGNRHRKRLPVRGQRTKTNSRTRKGKRRTVGSKTK. A compositionally biased stretch (basic residues) spans 91-124; it reads GNRHRKRLPVRGQRTKTNSRTRKGKRRTVGSKTK.

Belongs to the universal ribosomal protein uS13 family. As to quaternary structure, part of the 30S ribosomal subunit. Forms a loose heterodimer with protein S19. Forms two bridges to the 50S subunit in the 70S ribosome.

Located at the top of the head of the 30S subunit, it contacts several helices of the 16S rRNA. In the 70S ribosome it contacts the 23S rRNA (bridge B1a) and protein L5 of the 50S subunit (bridge B1b), connecting the 2 subunits; these bridges are implicated in subunit movement. Contacts the tRNAs in the A and P-sites. The chain is Small ribosomal subunit protein uS13 from Elusimicrobium minutum (strain Pei191).